We begin with the raw amino-acid sequence, 139 residues long: AP-4 complex subunit sigma (139 aa).

Belongs to the adaptor complexes small subunit family. As to quaternary structure, may be part of the adaptor protein complex 4 (AP-4), a heterotetramer composed of two large adaptins (epsilon-type subunitand beta-type subunit), a medium adaptin (mu-type subunit) and a small adaptin (sigma-type).

The protein resides in the golgi apparatus. Its subcellular location is the trans-Golgi network membrane. Its function is as follows. Probable component of an adaptor protein complex. Adaptor protein complexes are vesicle coat components involved both in vesicle formation and cargo selection. They control the vesicular transport of proteins in different trafficking pathways. The protein is AP-4 complex subunit sigma of Dictyostelium discoideum (Social amoeba).